The following is a 593-amino-acid chain: Proline--tRNA ligase (593 aa).

It belongs to the class-II aminoacyl-tRNA synthetase family. ProS type 1 subfamily. As to quaternary structure, homodimer.

The protein resides in the cytoplasm. It carries out the reaction tRNA(Pro) + L-proline + ATP = L-prolyl-tRNA(Pro) + AMP + diphosphate. In terms of biological role, catalyzes the attachment of proline to tRNA(Pro) in a two-step reaction: proline is first activated by ATP to form Pro-AMP and then transferred to the acceptor end of tRNA(Pro). As ProRS can inadvertently accommodate and process non-cognate amino acids such as alanine and cysteine, to avoid such errors it has two additional distinct editing activities against alanine. One activity is designated as 'pretransfer' editing and involves the tRNA(Pro)-independent hydrolysis of activated Ala-AMP. The other activity is designated 'posttransfer' editing and involves deacylation of mischarged Ala-tRNA(Pro). The misacylated Cys-tRNA(Pro) is not edited by ProRS. The sequence is that of Proline--tRNA ligase from Parasynechococcus marenigrum (strain WH8102).